The primary structure comprises 504 residues: Aspartyl/glutamyl-tRNA(Asn/Gln) amidotransferase subunit B (504 aa).

Belongs to the GatB/GatE family. GatB subfamily. As to quaternary structure, heterotrimer of A, B and C subunits.

It catalyses the reaction L-glutamyl-tRNA(Gln) + L-glutamine + ATP + H2O = L-glutaminyl-tRNA(Gln) + L-glutamate + ADP + phosphate + H(+). The enzyme catalyses L-aspartyl-tRNA(Asn) + L-glutamine + ATP + H2O = L-asparaginyl-tRNA(Asn) + L-glutamate + ADP + phosphate + 2 H(+). In terms of biological role, allows the formation of correctly charged Asn-tRNA(Asn) or Gln-tRNA(Gln) through the transamidation of misacylated Asp-tRNA(Asn) or Glu-tRNA(Gln) in organisms which lack either or both of asparaginyl-tRNA or glutaminyl-tRNA synthetases. The reaction takes place in the presence of glutamine and ATP through an activated phospho-Asp-tRNA(Asn) or phospho-Glu-tRNA(Gln). This is Aspartyl/glutamyl-tRNA(Asn/Gln) amidotransferase subunit B from Tropheryma whipplei (strain TW08/27) (Whipple's bacillus).